Consider the following 1313-residue polypeptide: Restriction of telomere capping protein 1 (1313 aa).

Over residues 1–17 the composition is skewed to polar residues; the sequence is MSNYSCPRTHNKSNMSG. Disordered regions lie at residues 1–22 and 38–83; these read MSNY…NEVK and NSIH…QQLM. Over residues 57–69 the composition is skewed to low complexity; the sequence is YSFGSINSSNSSY. Positions 70 to 83 are enriched in basic and acidic residues; that stretch reads DRSRDPSSVEQQLM. WD repeat units lie at residues 180 to 221, 229 to 269, 339 to 378, 442 to 484, 711 to 752, 795 to 837, 1100 to 1143, and 1190 to 1229; these read IKLS…NIDN, EHSR…LSGS, AHTG…NDAP, GEEA…NTDR, SQVD…ALST, QHKV…LLWD, SPKE…KQLF, and LFEI…LIVN. The segment at 1267-1309 adopts an RING-type; degenerate zinc-finger fold; the sequence is CVLCEKPMKKLVMCVLACGHEGHFQCLRDWFLNEGMNECPAGD.

Belongs to the WD repeat RTC1 family.

It localises to the vacuole. Its function is as follows. May be involved in a process influencing telomere capping. The sequence is that of Restriction of telomere capping protein 1 (RTC1) from Vanderwaltozyma polyspora (strain ATCC 22028 / DSM 70294 / BCRC 21397 / CBS 2163 / NBRC 10782 / NRRL Y-8283 / UCD 57-17) (Kluyveromyces polysporus).